Consider the following 170-residue polypeptide: Shikimate kinase (170 aa).

An ATP-binding site is contributed by 11–16 (LSGKST). Ser-15 provides a ligand contact to Mg(2+). Residues Asp-33, Arg-57, and Gly-79 each contribute to the substrate site. Arg-119 contacts ATP. Arg-137 is a binding site for substrate.

This sequence belongs to the shikimate kinase family. In terms of assembly, monomer. Mg(2+) serves as cofactor.

Its subcellular location is the cytoplasm. It carries out the reaction shikimate + ATP = 3-phosphoshikimate + ADP + H(+). The protein operates within metabolic intermediate biosynthesis; chorismate biosynthesis; chorismate from D-erythrose 4-phosphate and phosphoenolpyruvate: step 5/7. Catalyzes the specific phosphorylation of the 3-hydroxyl group of shikimic acid using ATP as a cosubstrate. The protein is Shikimate kinase of Clostridium botulinum (strain Okra / Type B1).